Reading from the N-terminus, the 395-residue chain is Enolase (395 aa).

2 residues coordinate substrate: histidine 136 and glutamate 145. Glutamate 188 (proton donor) is an active-site residue. Residues aspartate 223, glutamate 271, and aspartate 296 each coordinate Mg(2+). Substrate is bound by residues glutamate 271 and aspartate 296. Lysine 321 serves as the catalytic Proton acceptor. Substrate-binding positions include 348–351 (SHRS) and lysine 372.

The protein belongs to the enolase family. Homodimer. The cofactor is Mg(2+).

It localises to the cytoplasm. The enzyme catalyses (2R)-2-phosphoglycerate = phosphoenolpyruvate + H2O. It participates in carbohydrate degradation; glycolysis; pyruvate from D-glyceraldehyde 3-phosphate: step 4/5. This is Enolase from Alligator mississippiensis (American alligator).